The primary structure comprises 155 residues: Small ribosomal subunit protein uS7c (155 aa).

This sequence belongs to the universal ribosomal protein uS7 family. As to quaternary structure, part of the 30S ribosomal subunit.

It is found in the plastid. The protein resides in the chloroplast. Functionally, one of the primary rRNA binding proteins, it binds directly to 16S rRNA where it nucleates assembly of the head domain of the 30S subunit. This is Small ribosomal subunit protein uS7c (rps7) from Marchantia polymorpha (Common liverwort).